The sequence spans 422 residues: Glyceraldehyde-3-phosphate dehydrogenase GAPCP1, chloroplastic (422 aa).

Residues 1–69 (MAFSSLLRSA…NARSVQPIKA (69 aa)) constitute a chloroplast transit peptide. A compositionally biased stretch (polar residues) spans 50–63 (SGISSSLQNGNARS). A disordered region spans residues 50–84 (SGISSSLQNGNARSVQPIKATATEVPSAVRRSSSS). Thr-70 is subject to N-acetylthreonine. NAD(+) is bound by residues 96–97 (RI), Asp-118, and Arg-164. D-glyceraldehyde 3-phosphate contacts are provided by residues 235–237 (SCT), Thr-266, 295–296 (TG), and Arg-318. Cys-236 (nucleophile) is an active-site residue. Asn-400 contributes to the NAD(+) binding site.

It belongs to the glyceraldehyde-3-phosphate dehydrogenase family. As to quaternary structure, homotetramer. In terms of tissue distribution, expressed in shoot and root vasculature, leaf veins and vascular tissue of flowers and siliques.

The protein resides in the plastid. Its subcellular location is the chloroplast stroma. It catalyses the reaction D-glyceraldehyde 3-phosphate + phosphate + NAD(+) = (2R)-3-phospho-glyceroyl phosphate + NADH + H(+). Its function is as follows. Involved in plastidial glycolytic pathway and plays a specific role in glycolytic energy production in non-green plastids and chloroplasts. Essential for breakdown of starch to form sucrose for export to non-photosynthetic tissues, and to generate primary metabolites for anabolic pathways such as fatty acid and amino acid synthesis. Plays an important role in plant development by providing substrates for the phosphorylated pathway of serine biosynthesis in roots. Plays a crucial role in pollen development. Functionally redundant with GAPCP2. This is Glyceraldehyde-3-phosphate dehydrogenase GAPCP1, chloroplastic (GAPCP1) from Arabidopsis thaliana (Mouse-ear cress).